A 159-amino-acid polypeptide reads, in one-letter code: ATP synthase subunit b' (159 aa).

Residues 27–47 (ATLPLMAVQFLILTVILNALL) traverse the membrane as a helical segment.

It belongs to the ATPase B chain family. As to quaternary structure, F-type ATPases have 2 components, F(1) - the catalytic core - and F(0) - the membrane proton channel. F(1) has five subunits: alpha(3), beta(3), gamma(1), delta(1), epsilon(1). F(0) has four main subunits: a(1), b(1), b'(1) and c(10-14). The alpha and beta chains form an alternating ring which encloses part of the gamma chain. F(1) is attached to F(0) by a central stalk formed by the gamma and epsilon chains, while a peripheral stalk is formed by the delta, b and b' chains.

The protein resides in the cellular thylakoid membrane. F(1)F(0) ATP synthase produces ATP from ADP in the presence of a proton or sodium gradient. F-type ATPases consist of two structural domains, F(1) containing the extramembraneous catalytic core and F(0) containing the membrane proton channel, linked together by a central stalk and a peripheral stalk. During catalysis, ATP synthesis in the catalytic domain of F(1) is coupled via a rotary mechanism of the central stalk subunits to proton translocation. Its function is as follows. Component of the F(0) channel, it forms part of the peripheral stalk, linking F(1) to F(0). The b'-subunit is a diverged and duplicated form of b found in plants and photosynthetic bacteria. This is ATP synthase subunit b' from Synechococcus sp. (strain PCC 6716).